The primary structure comprises 271 residues: Phosphatidylinositol transfer protein alpha isoform (271 aa).

A 1,2-diacyl-sn-glycero-3-phospho-(1D-myo-inositol) contacts are provided by Thr-59, Lys-61, Glu-86, Asn-90, Thr-97, and Lys-195. The residue at position 216 (Lys-216) is an N6-acetyllysine. Basic and acidic residues predominate over residues 251–264 (TKRQLDEMRQKDPV). A disordered region spans residues 251–271 (TKRQLDEMRQKDPVKGMTADD).

Belongs to the PtdIns transfer protein family. PI transfer class I subfamily. Post-translationally, phosphorylated by PKC in a calcium and phosphatidylserine-dependent manner.

It localises to the cytoplasm. It is found in the nucleus. It catalyses the reaction a 1,2-diacyl-sn-glycero-3-phosphocholine(in) = a 1,2-diacyl-sn-glycero-3-phosphocholine(out). It carries out the reaction a 1,2-diacyl-sn-glycero-3-phospho-(1D-myo-inositol)(in) = a 1,2-diacyl-sn-glycero-3-phospho-(1D-myo-inositol)(out). Functionally, catalyzes the transfer of phosphatidylinositol (PI) and phosphatidylcholine (PC) between membranes. Shows a preference for PI and PC containing shorter saturated or monosaturated acyl chains at the sn-1 and sn-2 positions. Preference order for PC is C16:1 &gt; C16:0 &gt; C18:1 &gt; C18:0 &gt; C20:4 and for PI is C16:1 &gt; C16:0 &gt; C18:1 &gt; C18:0 &gt; C20:4 &gt; C20:3. In Mus musculus (Mouse), this protein is Phosphatidylinositol transfer protein alpha isoform (Pitpna).